A 460-amino-acid chain; its full sequence is Methionine aminopeptidase 2-1 (460 aa).

The interval M1–P90 is disordered. The segment covering S30 to G39 has biased composition (low complexity). Positions E42–E52 are enriched in acidic residues. Over residues T69 to S81 the composition is skewed to basic residues. Residue H212 coordinates substrate. A divalent metal cation contacts are provided by D233, D244, and H313. H321 serves as a coordination point for substrate. Residues E346 and E441 each coordinate a divalent metal cation.

The protein belongs to the peptidase M24A family. Methionine aminopeptidase eukaryotic type 2 subfamily. Co(2+) serves as cofactor. Zn(2+) is required as a cofactor. The cofactor is Mn(2+). Requires Fe(2+) as cofactor.

The protein resides in the cytoplasm. It catalyses the reaction Release of N-terminal amino acids, preferentially methionine, from peptides and arylamides.. Functionally, cotranslationally removes the N-terminal methionine from nascent proteins. The N-terminal methionine is often cleaved when the second residue in the primary sequence is small and uncharged (Met-Ala-, Cys, Gly, Pro, Ser, Thr, or Val). This Leptosphaeria maculans (strain JN3 / isolate v23.1.3 / race Av1-4-5-6-7-8) (Blackleg fungus) protein is Methionine aminopeptidase 2-1.